The following is a 178-amino-acid chain: tRNA (cytidine(56)-2'-O)-methyltransferase (178 aa).

Position 88 (Leu-88) interacts with S-adenosyl-L-methionine.

This sequence belongs to the aTrm56 family. In terms of assembly, homodimer.

The protein localises to the cytoplasm. The catalysed reaction is cytidine(56) in tRNA + S-adenosyl-L-methionine = 2'-O-methylcytidine(56) in tRNA + S-adenosyl-L-homocysteine + H(+). Specifically catalyzes the AdoMet-dependent 2'-O-ribose methylation of cytidine at position 56 in tRNAs. This Methanopyrus kandleri (strain AV19 / DSM 6324 / JCM 9639 / NBRC 100938) protein is tRNA (cytidine(56)-2'-O)-methyltransferase.